The following is a 444-amino-acid chain: Tol-Pal system protein TolB (444 aa).

The signal sequence occupies residues 1 to 26 (MNLFRSLAPMGLALALLLPAAAPALA). Residues 287 to 310 (ASGTRRQLTNSPSIETAPSYSPDG) are compositionally biased toward polar residues. The tract at residues 287–311 (ASGTRRQLTNSPSIETAPSYSPDGS) is disordered.

The protein belongs to the TolB family. The Tol-Pal system is composed of five core proteins: the inner membrane proteins TolA, TolQ and TolR, the periplasmic protein TolB and the outer membrane protein Pal. They form a network linking the inner and outer membranes and the peptidoglycan layer.

Its subcellular location is the periplasm. Its function is as follows. Part of the Tol-Pal system, which plays a role in outer membrane invagination during cell division and is important for maintaining outer membrane integrity. This chain is Tol-Pal system protein TolB, found in Cereibacter sphaeroides (strain ATCC 17025 / ATH 2.4.3) (Rhodobacter sphaeroides).